A 644-amino-acid chain; its full sequence is Exoribonuclease 2 (644 aa).

Residues 189 to 516 enclose the RNB domain; the sequence is REDLTALDFV…NHRLLKAVIK (328 aa). Residues 561–643 enclose the S1 motif domain; it reads DTRFAAEIVD…ETRSIIARPV (83 aa).

The protein belongs to the RNR ribonuclease family. RNase II subfamily.

The protein localises to the cytoplasm. The catalysed reaction is Exonucleolytic cleavage in the 3'- to 5'-direction to yield nucleoside 5'-phosphates.. Functionally, involved in mRNA degradation. Hydrolyzes single-stranded polyribonucleotides processively in the 3' to 5' direction. This Escherichia coli O17:K52:H18 (strain UMN026 / ExPEC) protein is Exoribonuclease 2.